Reading from the N-terminus, the 255-residue chain is Triosephosphate isomerase (255 aa).

A substrate-binding site is contributed by 9 to 11 (NWK). His-95 (electrophile) is an active-site residue. Glu-167 (proton acceptor) is an active-site residue. Residues Gly-173, Ser-212, and 233-234 (GG) each bind substrate.

It belongs to the triosephosphate isomerase family. As to quaternary structure, homodimer.

Its subcellular location is the cytoplasm. It carries out the reaction D-glyceraldehyde 3-phosphate = dihydroxyacetone phosphate. The protein operates within carbohydrate biosynthesis; gluconeogenesis. It participates in carbohydrate degradation; glycolysis; D-glyceraldehyde 3-phosphate from glycerone phosphate: step 1/1. Its function is as follows. Involved in the gluconeogenesis. Catalyzes stereospecifically the conversion of dihydroxyacetone phosphate (DHAP) to D-glyceraldehyde-3-phosphate (G3P). The sequence is that of Triosephosphate isomerase from Salmonella agona (strain SL483).